We begin with the raw amino-acid sequence, 1086 residues long: DNA polymerase (1086 aa).

The segment at 638-657 (STTRKPVDDVEEHSECNGFT) is disordered.

It belongs to the DNA polymerase type-B family.

The enzyme catalyses DNA(n) + a 2'-deoxyribonucleoside 5'-triphosphate = DNA(n+1) + diphosphate. In terms of biological role, replicates the viral genome. Host DNA polymerases cannot substitute for the viral enzyme in this process. The sequence is that of DNA polymerase from Noctuidae (owlet moths).